We begin with the raw amino-acid sequence, 343 residues long: Small ribosomal subunit biogenesis GTPase RsgA (343 aa).

Positions 116 to 275 (RGQLKPVAAN…LIDSPGIREF (160 aa)) constitute a CP-type G domain. GTP-binding positions include 163-166 (NKFD) and 217-225 (GQSGVGKSS). Positions 299, 304, 306, and 312 each coordinate Zn(2+).

It belongs to the TRAFAC class YlqF/YawG GTPase family. RsgA subfamily. As to quaternary structure, monomer. Associates with 30S ribosomal subunit, binds 16S rRNA. It depends on Zn(2+) as a cofactor.

It is found in the cytoplasm. One of several proteins that assist in the late maturation steps of the functional core of the 30S ribosomal subunit. Helps release RbfA from mature subunits. May play a role in the assembly of ribosomal proteins into the subunit. Circularly permuted GTPase that catalyzes slow GTP hydrolysis, GTPase activity is stimulated by the 30S ribosomal subunit. This Pseudomonas fluorescens (strain Pf0-1) protein is Small ribosomal subunit biogenesis GTPase RsgA.